Consider the following 414-residue polypeptide: DNA polymerase processivity factor (414 aa).

The interval 327–414 is disordered; that stretch reads SESCSLDPPR…SLKLTFNPLI (88 aa). A compositionally biased stretch (basic residues) spans 389-405; sequence SEKRKREGGKKGPKAKS.

It belongs to the herpesviridae DNA polymerase accessory subunit family.

Increases the processivity of the viral polymerase, probably by acting as a sliding clamp that prevents dissociation of the polymerase from the active template. This Equine herpesvirus 2 (strain 86/87) (EHV-2) protein is DNA polymerase processivity factor (59).